The primary structure comprises 364 residues: tRNA/tmRNA (uracil-C(5))-methyltransferase (364 aa).

Gln-186, Tyr-214, Asn-219, Glu-235, and Asp-295 together coordinate S-adenosyl-L-methionine. Cys-320 (nucleophile) is an active-site residue. Glu-354 acts as the Proton acceptor in catalysis.

Belongs to the class I-like SAM-binding methyltransferase superfamily. RNA M5U methyltransferase family. TrmA subfamily.

It catalyses the reaction uridine(54) in tRNA + S-adenosyl-L-methionine = 5-methyluridine(54) in tRNA + S-adenosyl-L-homocysteine + H(+). The enzyme catalyses uridine(341) in tmRNA + S-adenosyl-L-methionine = 5-methyluridine(341) in tmRNA + S-adenosyl-L-homocysteine + H(+). In terms of biological role, dual-specificity methyltransferase that catalyzes the formation of 5-methyluridine at position 54 (m5U54) in all tRNAs, and that of position 341 (m5U341) in tmRNA (transfer-mRNA). In Azoarcus sp. (strain BH72), this protein is tRNA/tmRNA (uracil-C(5))-methyltransferase.